The sequence spans 159 residues: Protein hunchback (159 aa).

Residues 18-34 (HNHHHHHHHGHHQHQQR) are compositionally biased toward basic residues. 2 disordered regions span residues 18 to 49 (HNHH…QSPL) and 119 to 159 (LTPP…KYMA). A compositionally biased stretch (basic and acidic residues) spans 140 to 159 (EPEKEHDLMSNSSEDMKYMA).

This sequence belongs to the hunchback C2H2-type zinc-finger protein family.

It localises to the nucleus. In terms of biological role, gap class segmentation protein that controls development of head structures. The sequence is that of Protein hunchback (hb) from Drosophila soonae (Fruit fly).